The following is a 145-amino-acid chain: Large ribosomal subunit protein uL16 (145 aa).

This sequence belongs to the universal ribosomal protein uL16 family. In terms of assembly, part of the 50S ribosomal subunit.

Binds 23S rRNA and is also seen to make contacts with the A and possibly P site tRNAs. In Lachnospira eligens (strain ATCC 27750 / DSM 3376 / VPI C15-48 / C15-B4) (Eubacterium eligens), this protein is Large ribosomal subunit protein uL16.